A 130-amino-acid polypeptide reads, in one-letter code: Mitochondrial import protein 1 (130 aa).

Positions 1–41 are disordered; that stretch reads MSAEEISNPLAESGVTISSDSEQYSAPESASPQSPSSSSPA. The span at 15–24 shows a compositional bias: polar residues; the sequence is VTISSDSEQY. The segment covering 25 to 41 has biased composition (low complexity); sequence SAPESASPQSPSSSSPA.

Belongs to the MIM1 family.

The protein resides in the mitochondrion outer membrane. Its function is as follows. Required for the assembly of the TOM (translocase of outer membrane) receptor complex, which is responsible for the recognition and translocation of cytosolically synthesized mitochondrial preproteins. The polypeptide is Mitochondrial import protein 1 (Neurospora crassa (strain ATCC 24698 / 74-OR23-1A / CBS 708.71 / DSM 1257 / FGSC 987)).